The chain runs to 171 residues: Small ribosomal subunit protein uS5 (171 aa).

One can recognise an S5 DRBM domain in the interval 15-78 (YEEKVVKIKR…EKAKKQLIRI (64 aa)).

Belongs to the universal ribosomal protein uS5 family. Part of the 30S ribosomal subunit. Contacts proteins S4 and S8.

With S4 and S12 plays an important role in translational accuracy. In terms of biological role, located at the back of the 30S subunit body where it stabilizes the conformation of the head with respect to the body. The sequence is that of Small ribosomal subunit protein uS5 from Phytoplasma australiense.